The primary structure comprises 649 residues: MSHIIELPEMLANQIAAGEVIERPASVVKELVENAIDAGSSQIIIEIEEAGLKKIQITDNGHGIAHDEVELALRRHATSKIKNQADLFRIRTLGFRGEALPSIASVSVLTLLTAVDGASHGTKLVARGGEVEEVIPATSPVGTKVCVEDLFFNTPARLKYMKSQQAELSHIIDIVNRLGLAHPEISFSLISDGKEMTRTAGTGQLRQAIAGIYGLVSAKKMIEIENSDLDFEISGFVSLPELTRANRNYISLFINGRYIKNFLLNRAILDGFGSKLMVGRFPLAVIHIHIDPYLADVNVHPTKQEVRISKEKELMALVSEAIANSLKEQTLIPDALENLAKSTVRNREKVEQTILPLKENTFYYEKTEPSRPSQTEVADYQVELTDEGQDLTLFAKETLDRLTKPAKLHFAERKPANYDQLDHPELDLASIDKAYDKLEREEASSFPELEFFGQMHGTYLFAQGRDGLYIIDQHAAQERVKYEEYRESIGNVDQSQQQLLVPYIFEFPADDALRLKERMPLLEEVGVFLAEYGENQFILREHPIWMAEEEIESGIYEMCDMLLLTKEVSIKKYRAELAIMMSCKRSIKANHRIDDHSARQLLYQLSQCDNPYNCPHGRPVLVHFTKSDMEKMFRRIQENHTSLRELGKY.

Belongs to the DNA mismatch repair MutL/HexB family.

This protein is involved in the repair of mismatches in DNA. It is required for dam-dependent methyl-directed DNA mismatch repair. May act as a 'molecular matchmaker', a protein that promotes the formation of a stable complex between two or more DNA-binding proteins in an ATP-dependent manner without itself being part of a final effector complex. The sequence is that of DNA mismatch repair protein MutL from Streptococcus pneumoniae serotype 19F (strain G54).